Reading from the N-terminus, the 309-residue chain is Probable sugar phosphate/phosphate translocator At5g05820 (309 aa).

Helical transmembrane passes span 9–29 (FFTIGLVASWYSSNIGVLLLN), 42–62 (IFLTMCHMTACSLLSYVAIAW), 77–97 (FFKIAALSLVFCVSVVFGNIS), 100–120 (FLPVSFNQAIGATTPFFTAVF), 130–150 (AWLTYFTLVPVVTGVVIASGG), 154–174 (FHLFGFLMCIAATAARALKSV), 192–212 (LLLYMAPIAVVLLLPATLIME), 229–249 (IVWYLLFNSALAYLVNLTNFL), 256–278 (ALTLQVLGNAKGAVAVVVSILIF), and 282–301 (VSVTGMLGYSLTVCGVILYS). In terms of domain architecture, EamA spans 30–147 (KYLLSNYGFK…VPVVTGVVIA (118 aa)).

Belongs to the TPT transporter family. TPT (TC 2.A.7.9) subfamily.

It localises to the membrane. This chain is Probable sugar phosphate/phosphate translocator At5g05820, found in Arabidopsis thaliana (Mouse-ear cress).